The following is a 174-amino-acid chain: Keratin-associated protein 1-5 (174 aa).

Positions Cys-3–Pro-172 are 15 X 5 AA repeats of C-C-[QEPVRC]-[TPIVLE]-[SRHVP].

It belongs to the KRTAP type 1 family. In terms of assembly, interacts with hair keratins. Expressed in the middle/upper portions of the hair cortex, in the region termed the keratogenous zone.

Its function is as follows. In the hair cortex, hair keratin intermediate filaments are embedded in an interfilamentous matrix, consisting of hair keratin-associated proteins (KRTAP), which are essential for the formation of a rigid and resistant hair shaft through their extensive disulfide bond cross-linking with abundant cysteine residues of hair keratins. The matrix proteins include the high-sulfur and high-glycine-tyrosine keratins. This is Keratin-associated protein 1-5 (KRTAP1-5) from Homo sapiens (Human).